The following is an 80-amino-acid chain: Putative ATP-dependent Clp protease proteolytic subunit (80 aa).

The active site involves His-19.

The protein belongs to the peptidase S14 family. As to quaternary structure, component of the chloroplastic Clp protease core complex.

Its subcellular location is the plastid. The protein localises to the chloroplast. The catalysed reaction is Hydrolysis of proteins to small peptides in the presence of ATP and magnesium. alpha-casein is the usual test substrate. In the absence of ATP, only oligopeptides shorter than five residues are hydrolyzed (such as succinyl-Leu-Tyr-|-NHMec, and Leu-Tyr-Leu-|-Tyr-Trp, in which cleavage of the -Tyr-|-Leu- and -Tyr-|-Trp bonds also occurs).. In terms of biological role, cleaves peptides in various proteins in a process that requires ATP hydrolysis. Has a chymotrypsin-like activity. Plays a major role in the degradation of misfolded proteins. The sequence is that of Putative ATP-dependent Clp protease proteolytic subunit from Pinus strobus (Eastern white pine).